Here is a 400-residue protein sequence, read N- to C-terminus: Phosphoglycerate kinase (400 aa).

Substrate-binding positions include 24 to 26 (DFN), arginine 40, 63 to 66 (HFGR), arginine 121, and arginine 154. ATP contacts are provided by residues lysine 205, glycine 296, glutamate 327, and 356 to 359 (GGDS).

It belongs to the phosphoglycerate kinase family. Monomer.

The protein localises to the cytoplasm. The catalysed reaction is (2R)-3-phosphoglycerate + ATP = (2R)-3-phospho-glyceroyl phosphate + ADP. The protein operates within carbohydrate degradation; glycolysis; pyruvate from D-glyceraldehyde 3-phosphate: step 2/5. The chain is Phosphoglycerate kinase from Nostoc punctiforme (strain ATCC 29133 / PCC 73102).